A 52-amino-acid polypeptide reads, in one-letter code: UPF0391 membrane protein XCV0245 (52 aa).

A run of 2 helical transmembrane segments spans residues 5 to 25 and 27 to 47; these read AIIFFVIAIIAAVLGFSGIAG and ATNIAWILFVVFLILAVISMF.

Belongs to the UPF0391 family.

The protein localises to the cell membrane. The polypeptide is UPF0391 membrane protein XCV0245 (Xanthomonas euvesicatoria pv. vesicatoria (strain 85-10) (Xanthomonas campestris pv. vesicatoria)).